The primary structure comprises 179 residues: Large ribosomal subunit protein uL5 (179 aa).

Belongs to the universal ribosomal protein uL5 family. Part of the 50S ribosomal subunit; part of the 5S rRNA/L5/L18/L25 subcomplex. Contacts the 5S rRNA and the P site tRNA. Forms a bridge to the 30S subunit in the 70S ribosome.

In terms of biological role, this is one of the proteins that bind and probably mediate the attachment of the 5S RNA into the large ribosomal subunit, where it forms part of the central protuberance. In the 70S ribosome it contacts protein S13 of the 30S subunit (bridge B1b), connecting the 2 subunits; this bridge is implicated in subunit movement. Contacts the P site tRNA; the 5S rRNA and some of its associated proteins might help stabilize positioning of ribosome-bound tRNAs. This is Large ribosomal subunit protein uL5 from Shewanella woodyi (strain ATCC 51908 / MS32).